The chain runs to 378 residues: Succinyl-diaminopimelate desuccinylase 2 (378 aa).

His68 lines the Zn(2+) pocket. The active site involves Asp70. Position 101 (Asp101) interacts with Zn(2+). Catalysis depends on Glu135, which acts as the Proton acceptor. Zn(2+) contacts are provided by Glu136, Glu164, and His350.

The protein belongs to the peptidase M20A family. DapE subfamily. As to quaternary structure, homodimer. Zn(2+) serves as cofactor. Requires Co(2+) as cofactor.

It carries out the reaction N-succinyl-(2S,6S)-2,6-diaminopimelate + H2O = (2S,6S)-2,6-diaminopimelate + succinate. Its pathway is amino-acid biosynthesis; L-lysine biosynthesis via DAP pathway; LL-2,6-diaminopimelate from (S)-tetrahydrodipicolinate (succinylase route): step 3/3. Functionally, catalyzes the hydrolysis of N-succinyl-L,L-diaminopimelic acid (SDAP), forming succinate and LL-2,6-diaminopimelate (DAP), an intermediate involved in the bacterial biosynthesis of lysine and meso-diaminopimelic acid, an essential component of bacterial cell walls. The polypeptide is Succinyl-diaminopimelate desuccinylase 2 (Alteromonas mediterranea (strain DSM 17117 / CIP 110805 / LMG 28347 / Deep ecotype)).